We begin with the raw amino-acid sequence, 284 residues long: Tropomyosin (284 aa).

A coiled-coil region spans residues 1–273 (MEAIKKKMQA…KEKYKSISDE (273 aa)).

This sequence belongs to the tropomyosin family. In terms of assembly, homodimer. As to expression, ubiquitous, but especially prevalent in the anterior muscle bundles associated with legs. Expression in the mid and posterior regions is probably related to the numerous, small muscle bundles associated with the digestive and reproductive systems (at protein level).

Its function is as follows. Tropomyosin, in association with the troponin complex, plays a central role in the calcium dependent regulation of muscle contraction. This chain is Tropomyosin, found in Psoroptes ovis (Sheep scab mite).